A 180-amino-acid chain; its full sequence is tRNA-splicing endonuclease (180 aa).

Catalysis depends on residues Tyr117, His125, and Lys156.

It belongs to the tRNA-intron endonuclease family. Archaeal short subfamily. In terms of assembly, homotetramer; although the tetramer contains four active sites, only two participate in the cleavage. Therefore, it should be considered as a dimer of dimers.

It catalyses the reaction pretRNA = a 3'-half-tRNA molecule with a 5'-OH end + a 5'-half-tRNA molecule with a 2',3'-cyclic phosphate end + an intron with a 2',3'-cyclic phosphate and a 5'-hydroxyl terminus.. Endonuclease that removes tRNA introns. Cleaves pre-tRNA at the 5'- and 3'-splice sites to release the intron. The products are an intron and two tRNA half-molecules bearing 2',3' cyclic phosphate and 5'-OH termini. Recognizes a pseudosymmetric substrate in which 2 bulged loops of 3 bases are separated by a stem of 4 bp. In Sulfurisphaera tokodaii (strain DSM 16993 / JCM 10545 / NBRC 100140 / 7) (Sulfolobus tokodaii), this protein is tRNA-splicing endonuclease.